The sequence spans 505 residues: Phosphoethanolamine N-methyltransferase (505 aa).

6 residues coordinate S-adenosyl-L-homocysteine: glycine 76, arginine 81, aspartate 97, aspartate 122, valine 123, and asparagine 141. Phosphocholine is bound by residues serine 174, serine 179, glycine 180, arginine 184, and tyrosine 191. N-methylethanolamine phosphate is bound by residues 260–261 and tyrosine 269; that span reads QY. Residue tyrosine 269 coordinates phosphocholine. S-adenosyl-L-homocysteine-binding residues include valine 278, serine 279, glycine 305, aspartate 327, aspartate 353, cysteine 354, and arginine 370. Phosphocholine contacts are provided by tyrosine 401, tyrosine 415, arginine 419, tyrosine 421, and lysine 487. Residues tyrosine 401, tyrosine 415, 419-421, and lysine 487 each bind N-methylethanolamine phosphate; that span reads RGY.

Belongs to the class I-like SAM-binding methyltransferase superfamily. PEAMT family.

It carries out the reaction phosphoethanolamine + S-adenosyl-L-methionine = N-methylethanolamine phosphate + S-adenosyl-L-homocysteine + H(+). The catalysed reaction is N-methylethanolamine phosphate + S-adenosyl-L-methionine = N,N-dimethylethanolamine phosphate + S-adenosyl-L-homocysteine + H(+). It catalyses the reaction N,N-dimethylethanolamine phosphate + S-adenosyl-L-methionine = phosphocholine + S-adenosyl-L-homocysteine + H(+). The protein operates within phospholipid metabolism; phosphatidylcholine biosynthesis; phosphocholine from phosphoethanolamine: step 1/1. Its activity is regulated as follows. Inhibited by phosphatidic acid. Involved in phosphocholine biosynthesis. Catalyzes the N-methylation of phosphoethanolamine, phosphomonomethylethanolamine and phosphodimethylethanolamine, the three methylation steps required to convert phosphoethanolamine to phosphocholine (PC). The protein is Phosphoethanolamine N-methyltransferase of Triticum aestivum (Wheat).